The sequence spans 860 residues: Alanine--tRNA ligase (860 aa).

Residues H563, H567, C665, and H669 each coordinate Zn(2+).

The protein belongs to the class-II aminoacyl-tRNA synthetase family. It depends on Zn(2+) as a cofactor.

The protein localises to the cytoplasm. It carries out the reaction tRNA(Ala) + L-alanine + ATP = L-alanyl-tRNA(Ala) + AMP + diphosphate. Functionally, catalyzes the attachment of alanine to tRNA(Ala) in a two-step reaction: alanine is first activated by ATP to form Ala-AMP and then transferred to the acceptor end of tRNA(Ala). Also edits incorrectly charged Ser-tRNA(Ala) and Gly-tRNA(Ala) via its editing domain. The sequence is that of Alanine--tRNA ligase from Vibrio cholerae serotype O1 (strain ATCC 39315 / El Tor Inaba N16961).